We begin with the raw amino-acid sequence, 432 residues long: Glutamate-1-semialdehyde 2,1-aminomutase 2 (432 aa).

Residue lysine 268 is modified to N6-(pyridoxal phosphate)lysine.

It belongs to the class-III pyridoxal-phosphate-dependent aminotransferase family. HemL subfamily. Homodimer. Pyridoxal 5'-phosphate is required as a cofactor.

The protein resides in the cytoplasm. It carries out the reaction (S)-4-amino-5-oxopentanoate = 5-aminolevulinate. Its pathway is porphyrin-containing compound metabolism; protoporphyrin-IX biosynthesis; 5-aminolevulinate from L-glutamyl-tRNA(Glu): step 2/2. The chain is Glutamate-1-semialdehyde 2,1-aminomutase 2 from Listeria monocytogenes serovar 1/2a (strain ATCC BAA-679 / EGD-e).